A 453-amino-acid chain; its full sequence is tRNA modification GTPase MnmE (453 aa).

(6S)-5-formyl-5,6,7,8-tetrahydrofolate contacts are provided by Arg-22, Glu-79, and Lys-119. The 162-residue stretch at 215-376 (GMKVVIAGRP…LQQHLKSLMG (162 aa)) folds into the TrmE-type G domain. Asn-225 provides a ligand contact to K(+). GTP is bound by residues 225-230 (NAGKSS), 244-250 (TEIAGTT), 269-272 (DTAG), and 334-337 (NKAD). Ser-229 is a binding site for Mg(2+). Positions 244, 246, and 249 each coordinate K(+). Mg(2+) is bound at residue Thr-250. Position 453 (Lys-453) interacts with (6S)-5-formyl-5,6,7,8-tetrahydrofolate.

The protein belongs to the TRAFAC class TrmE-Era-EngA-EngB-Septin-like GTPase superfamily. TrmE GTPase family. In terms of assembly, homodimer. Heterotetramer of two MnmE and two MnmG subunits. K(+) serves as cofactor.

The protein resides in the cytoplasm. Exhibits a very high intrinsic GTPase hydrolysis rate. Involved in the addition of a carboxymethylaminomethyl (cmnm) group at the wobble position (U34) of certain tRNAs, forming tRNA-cmnm(5)s(2)U34. The polypeptide is tRNA modification GTPase MnmE (Shewanella woodyi (strain ATCC 51908 / MS32)).